Reading from the N-terminus, the 282-residue chain is Cyanocobalamin reductase / alkylcobalamin dealkylase (282 aa).

Residues Asp104, 115 to 118 (ILAQ), 129 to 131 (YYQ), Cys149, and Ile160 each bind substrate. The segment at 234–282 (LGLAQPSEKPSSPSPDLPFTTPAPKKPGNPSRARSWLSPRVSPPASPGP) is disordered. Phosphoserine is present on residues Ser245, Ser247, Ser275, and Ser279.

Belongs to the MMACHC family. As to quaternary structure, monomer in the absence of bound substrate. Homodimer; dimerization is triggered by binding to FMN or adenosylcobalamin. Interacts with LMBRD1 and ABCD4; the interaction ensures the transport of cobalamin from the lysosome to the cytoplasm. Forms a multiprotein complex with MMADHC, MTR and MTRR; the interaction with MTR could modulate MMACHC-dependent processing of cobalamin. Heterodimer with MMADHC; the interaction might play a role in the regulation of the balance between AdoCbl and MeCbl synthesis. Requires FAD as cofactor. The cofactor is FMN. As to expression, widely expressed. Expressed at higher level in fetal liver. Also expressed in spleen, lymph node, thymus and bone marrow. Weakly or not expressed in peripheral blood leukocytes.

Its subcellular location is the cytoplasm. The protein localises to the cytosol. It catalyses the reaction 2 cob(II)alamin-[cyanocobalamin reductase] + 2 hydrogen cyanide + NADP(+) = 2 cyanocob(III)alamin + 2 apo-[cyanocobalamin reductase] + NADPH + H(+). The enzyme catalyses apo-[alkylcobalamin reductase] + an R-cob(III)alamin + glutathione = cob(I)alamin-[alkylcobalamin reductase] + an S-substituted glutathione + H(+). The catalysed reaction is apo-[alkylcobalamin reductase] + methylcob(III)alamin + glutathione = S-methyl glutathione + cob(I)alamin-[alkylcobalamin reductase] + H(+). It carries out the reaction apo-[alkylcobalamin reductase] + adenosylcob(III)alamin + glutathione = S-adenosylglutathione + cob(I)alamin-[alkylcobalamin reductase] + H(+). In terms of biological role, cobalamin (vitamin B12) cytosolic chaperone that catalyzes the reductive decyanation of cyanocob(III)alamin (cyanocobalamin, CNCbl) to yield cob(II)alamin and cyanide, using FAD or FMN as cofactors and NADPH as cosubstrate. Cyanocobalamin constitutes the inactive form of vitamin B12 introduced from the diet, and is converted into the active cofactors methylcobalamin (MeCbl) involved in methionine biosynthesis, and 5'-deoxyadenosylcobalamin (AdoCbl) involved in the TCA cycle. Forms a complex with the lysosomal transporter ABCD4 and its chaperone LMBRD1, to transport cobalamin across the lysosomal membrane into the cytosol. The processing of cobalamin in the cytosol occurs in a multiprotein complex composed of at least MMACHC, MMADHC, MTRR (methionine synthase reductase) and MTR (methionine synthase) which may contribute to shuttle safely and efficiently cobalamin towards MTR in order to produce methionine. Also acts as a glutathione transferase by catalyzing the dealkylation of the alkylcob(III)alamins MeCbl and AdoCbl, using the thiolate of glutathione for nucleophilic displacement to generate cob(I)alamin and the corresponding glutathione thioether. The conversion of incoming MeCbl or AdoCbl into a common intermediate cob(I)alamin is necessary to meet the cellular needs for both cofactors. Cysteine and homocysteine cannot substitute for glutathione in this reaction. The polypeptide is Cyanocobalamin reductase / alkylcobalamin dealkylase (Homo sapiens (Human)).